A 180-amino-acid chain; its full sequence is CDP-archaeol synthase (180 aa).

The next 5 helical transmembrane spans lie at 5–25 (LVAT…AAVL), 54–74 (AVGT…AEPA), 78–98 (LGVD…FGAM), 118–138 (AFPG…VFVV), and 142–162 (WALA…TPIL).

It belongs to the CDP-archaeol synthase family. Mg(2+) serves as cofactor.

It is found in the cell membrane. The catalysed reaction is 2,3-bis-O-(geranylgeranyl)-sn-glycerol 1-phosphate + CTP + H(+) = CDP-2,3-bis-O-(geranylgeranyl)-sn-glycerol + diphosphate. The protein operates within membrane lipid metabolism; glycerophospholipid metabolism. Functionally, catalyzes the formation of CDP-2,3-bis-(O-geranylgeranyl)-sn-glycerol (CDP-archaeol) from 2,3-bis-(O-geranylgeranyl)-sn-glycerol 1-phosphate (DGGGP) and CTP. This reaction is the third ether-bond-formation step in the biosynthesis of archaeal membrane lipids. The sequence is that of CDP-archaeol synthase from Halorubrum lacusprofundi (strain ATCC 49239 / DSM 5036 / JCM 8891 / ACAM 34).